Consider the following 205-residue polypeptide: Rho GDP-dissociation inhibitor (205 aa).

Polar residues predominate over residues 1–11; sequence MSVNNEVSADQ. The segment at 1 to 31 is disordered; that stretch reads MSVNNEVSADQHNPELEDDTFEHGPPVSLGE. Ser-63 carries the post-translational modification Phosphoserine.

This sequence belongs to the Rho GDI family.

Its subcellular location is the cytoplasm. The protein localises to the nucleus. In terms of biological role, regulates the GDP/GTP exchange reaction of the Rho proteins by inhibiting the dissociation of GDP from them, and the subsequent binding of GTP to them. The polypeptide is Rho GDP-dissociation inhibitor (Schizosaccharomyces pombe (strain 972 / ATCC 24843) (Fission yeast)).